A 151-amino-acid polypeptide reads, in one-letter code: Deoxyuridine 5'-triphosphate nucleotidohydrolase (151 aa).

Substrate is bound by residues 70-72 (RSG), asparagine 83, 87-89 (LID), and methionine 97.

The protein belongs to the dUTPase family. Requires Mg(2+) as cofactor.

It catalyses the reaction dUTP + H2O = dUMP + diphosphate + H(+). The protein operates within pyrimidine metabolism; dUMP biosynthesis; dUMP from dCTP (dUTP route): step 2/2. In terms of biological role, this enzyme is involved in nucleotide metabolism: it produces dUMP, the immediate precursor of thymidine nucleotides and it decreases the intracellular concentration of dUTP so that uracil cannot be incorporated into DNA. The protein is Deoxyuridine 5'-triphosphate nucleotidohydrolase of Actinobacillus succinogenes (strain ATCC 55618 / DSM 22257 / CCUG 43843 / 130Z).